The following is a 151-amino-acid chain: Lectin-like protein BA14k (151 aa).

The signal sequence occupies residues 1–26; sequence MNIFKQTCVGAFAVIFGATSIAPTMA. The chain crosses the membrane as a helical span at residues 83–103; sequence GWWYPLAAFGAGAIIGGAVSQ.

The protein belongs to the BA14k family.

It is found in the cell membrane. In terms of biological role, has immunoglobulin-binding and hemagglutination properties, and can bind to mannose. Essential for virulence. May be involved in LPS biosynthesis or polysaccharide transport. The protein is Lectin-like protein BA14k of Brucella anthropi (strain ATCC 49188 / DSM 6882 / CCUG 24695 / JCM 21032 / LMG 3331 / NBRC 15819 / NCTC 12168 / Alc 37) (Ochrobactrum anthropi).